We begin with the raw amino-acid sequence, 493 residues long: 6-aminohexanoate-cyclic-dimer hydrolase (493 aa).

Catalysis depends on charge relay system residues Lys-72 and Ser-150. Catalysis depends on Ser-174, which acts as the Acyl-ester intermediate.

It belongs to the amidase family. In terms of assembly, homodimer.

The enzyme catalyses 1,8-diazacyclotetradecane-2,9-dione + H2O = N-(6-aminohexanoyl)-6-aminohexanoate. It participates in xenobiotic degradation; nylon-6 oligomer degradation. Catalyzes the hydrolysis of 6-aminohexanoic acid cyclic dimer (1,8-diazacyclotetradecane-2,9-dione) to form the linear dimer 6-aminohexanoyl-6-aminohexanoic acid. The chain is 6-aminohexanoate-cyclic-dimer hydrolase (nylA) from Pseudomonas sp. (strain NK87).